The chain runs to 1121 residues: Ataxin-2 homolog (1121 aa).

Residues 1-10 (MNNNSKRKTR) are compositionally biased toward basic residues. The disordered stretch occupies residues 1–53 (MNNNSKRKTRPSGGGGGGGASGGISRYNANDNSLRPANNKSGAAGNSAGAGAG). Gly residues predominate over residues 12–22 (SGGGGGGGASG). The segment covering 27 to 36 (YNANDNSLRP) has biased composition (polar residues). A compositionally biased stretch (low complexity) spans 37–47 (ANNKSGAAGNS). The 76-residue stretch at 71–146 (FFMHSATALV…VVKIVAKDFD (76 aa)) folds into the Sm domain. A phosphoserine mark is found at serine 219 and serine 232. 4 disordered regions span residues 270–376 (FAAV…GQGG), 422–458 (GKVMRGNVPPNSSGGGNISAVQGGNGNPVGQSKGGYQ), 476–935 (MHGS…TTGT), and 1039–1076 (QTPQSTTPSPGQPHQPFHPPPQPSPAGGGPQPAYTPPT). The span at 274–310 (ERPEQDHRRDGDRERERNDRDREREERDRDRDRDRGN) shows a compositional bias: basic and acidic residues. Over residues 323–347 (ETMSSDRYITKQTRGPQMSHVSMSS) the composition is skewed to polar residues. 2 stretches are compositionally biased toward gly residues: residues 367–376 (ISGGGAGQGG) and 434–448 (SGGGNISAVQGGNGN). 2 stretches are compositionally biased toward polar residues: residues 476–487 (MHGSSQYRNPSH) and 499–524 (ANANTNKPLPQRQIRQYQGSQSNSLN). 4 stretches are compositionally biased toward low complexity: residues 552 to 596 (PPLQ…PQRQ), 623 to 684 (PPQQ…MQHQ), 697 to 711 (QPHYVPQPQQQQPQP), and 720 to 773 (QQQQ…APEP). The segment covering 774–789 (SQQPLPLYHPMPPPQT) has biased composition (pro residues). Composition is skewed to low complexity over residues 807-825 (ILTAQQPPQQQQLAATPKP) and 835-890 (TTTP…STPV). Pro residues-rich tracts occupy residues 914–926 (PSRPHTPQTPVPM) and 1048–1062 (PGQPHQPFHPPPQPS).

It belongs to the ataxin-2 family.

The protein localises to the cytoplasm. Its function is as follows. Regulator of actin filament formation, though it does not directly assemble with actin filaments. Required for oocyte specification and oocyte positioning in the female germline. Also required for normal eye development and bristle morphology. The sequence is that of Ataxin-2 homolog from Drosophila pseudoobscura pseudoobscura (Fruit fly).